The following is a 697-amino-acid chain: Putative cryptochrome DASH (697 aa).

Residues 5 to 164 form the Photolyase/cryptochrome alpha/beta domain; sequence KLLVYLLRRD…GFKLWHDEKY (160 aa). Disordered regions lie at residues 170–215 and 554–697; these read DNGL…FPSW and FSVT…PPHI. Over residues 188–198 the composition is skewed to basic and acidic residues; it reads KTQEPLRERPR. Over residues 560–569 the composition is skewed to basic residues; it reads RGNRRPYRWR. Gly residues predominate over residues 578–590; sequence GRGGRGGGTGNTS. Low complexity-rich tracts occupy residues 659–675 and 683–697; these read QQQQ…YAHQ and RQQQ…PPHI.

Belongs to the DNA photolyase class-1 family. FAD is required as a cofactor. (6R)-5,10-methylene-5,6,7,8-tetrahydrofolate serves as cofactor.

Functionally, may have a photoreceptor function. The polypeptide is Putative cryptochrome DASH (Gibberella zeae (strain ATCC MYA-4620 / CBS 123657 / FGSC 9075 / NRRL 31084 / PH-1) (Wheat head blight fungus)).